Here is a 207-residue protein sequence, read N- to C-terminus: Uracil phosphoribosyltransferase (207 aa).

Residues arginine 77, arginine 102, and 129 to 137 (DPMVATGGS) each bind 5-phospho-alpha-D-ribose 1-diphosphate. Uracil contacts are provided by residues isoleucine 192 and 197–199 (GDA). Position 198 (aspartate 198) interacts with 5-phospho-alpha-D-ribose 1-diphosphate.

The protein belongs to the UPRTase family. Requires Mg(2+) as cofactor.

It carries out the reaction UMP + diphosphate = 5-phospho-alpha-D-ribose 1-diphosphate + uracil. It functions in the pathway pyrimidine metabolism; UMP biosynthesis via salvage pathway; UMP from uracil: step 1/1. With respect to regulation, allosterically activated by GTP. Catalyzes the conversion of uracil and 5-phospho-alpha-D-ribose 1-diphosphate (PRPP) to UMP and diphosphate. In Mycobacterium bovis (strain ATCC BAA-935 / AF2122/97), this protein is Uracil phosphoribosyltransferase.